The sequence spans 332 residues: tRNA U34 carboxymethyltransferase (332 aa).

Residues lysine 91, tryptophan 105, lysine 110, glycine 130, 152–154 (DPS), 181–182 (IE), methionine 196, tyrosine 200, and arginine 315 each bind carboxy-S-adenosyl-L-methionine.

The protein belongs to the class I-like SAM-binding methyltransferase superfamily. CmoB family. Homotetramer.

It catalyses the reaction carboxy-S-adenosyl-L-methionine + 5-hydroxyuridine(34) in tRNA = 5-carboxymethoxyuridine(34) in tRNA + S-adenosyl-L-homocysteine + H(+). Functionally, catalyzes carboxymethyl transfer from carboxy-S-adenosyl-L-methionine (Cx-SAM) to 5-hydroxyuridine (ho5U) to form 5-carboxymethoxyuridine (cmo5U) at position 34 in tRNAs. This is tRNA U34 carboxymethyltransferase from Shewanella putrefaciens (strain CN-32 / ATCC BAA-453).